Here is a 192-residue protein sequence, read N- to C-terminus: E3 ubiquitin-protein ligase RNF185 (192 aa).

A compositionally biased stretch (low complexity) spans 1–27 (MASKGPSASASPENSSAGGPSGSSNGA). Residues 1–30 (MASKGPSASASPENSSAGGPSGSSNGAGES) form a disordered region. Over 1–130 (MASKGPSASA…GGFQGFGFGD (130 aa)) the chain is Cytoplasmic. The tract at residues 29–80 (ESGGQDSTFECNICLDTAKDAVISLCGHLFCWPCLHQWLETRPNRQVCPVCK) is required for ubiquitin ligase activity and protection against ER stress-induced cell death. The RING-type zinc finger occupies 39-80 (CNICLDTAKDAVISLCGHLFCWPCLHQWLETRPNRQVCPVCK). A disordered region spans residues 90–123 (PLYGRGSTGQQDPREKTPPRPQGQRPEPENRGGF). A helical membrane pass occupies residues 131–151 (GGFQMSFGIGAFPFGIFATAF). Topologically, residues 152 to 171 (NINDGRPPPAVPGTPQYVDE) are mitochondrial intermembrane. A helical membrane pass occupies residues 172–192 (QFLSRLFLFVALVIMFWLLIA).

As to quaternary structure, interacts with ATG5 and BNIP1. In terms of tissue distribution, ubiquitously expressed.

The protein localises to the mitochondrion outer membrane. It localises to the endoplasmic reticulum membrane. The catalysed reaction is S-ubiquitinyl-[E2 ubiquitin-conjugating enzyme]-L-cysteine + [acceptor protein]-L-lysine = [E2 ubiquitin-conjugating enzyme]-L-cysteine + N(6)-ubiquitinyl-[acceptor protein]-L-lysine.. Its pathway is protein modification; protein ubiquitination. E3 ubiquitin-protein ligase that regulates selective mitochondrial autophagy by mediating 'Lys-63'-linked polyubiquitination of BNIP1. Acts in the endoplasmic reticulum (ER)-associated degradation (ERAD) pathway, which targets misfolded proteins that accumulate in the endoplasmic reticulum (ER) for ubiquitination and subsequent proteasome-mediated degradation. Protects cells from ER stress-induced apoptosis. Responsible for the cotranslational ubiquitination and degradation of CFTR in the ERAD pathway. Also acts as a regulator of the innate antiviral response by catalyzing 'Lys-27'-linked polyubiquitination of CGAS at 'Lys-173' and 'Lys-384', thereby promoting CGAS cyclic GMP-AMP synthase activity. Preferentially associates with the E2 enzymes UBE2J1 and UBE2J2. The sequence is that of E3 ubiquitin-protein ligase RNF185 from Homo sapiens (Human).